We begin with the raw amino-acid sequence, 386 residues long: Na(+)/H(+) antiporter NhaA (386 aa).

11 consecutive transmembrane segments (helical) span residues 11-31 (NDATGGVVLIVAAAFAMFLAN), 60-80 (LLLWINDALMALFFLMIGLEV), 96-116 (MFPLIAALGGMLAPGLIYAAF), 126-146 (GWAIPTATDIAFALGILALLG), 155-175 (MFLMALAVIDDLGAIVIIALF), 180-200 (LSLISLTVAAASIAVLAVLNG), 218-238 (VAVLKSGVHATLAGVIVGLFI), 260-280 (VSWLILPLFAFANAGISLSGV), 293-313 (ITLGLFIGKPLGITLICWLAV), 326-346 (LIDIAAVGVLCGIGFTMSIFI), and 358-378 (LVTLAKLGILSGSVISALVGY).

It belongs to the NhaA Na(+)/H(+) (TC 2.A.33) antiporter family.

The protein localises to the cell inner membrane. It catalyses the reaction Na(+)(in) + 2 H(+)(out) = Na(+)(out) + 2 H(+)(in). Its function is as follows. Na(+)/H(+) antiporter that extrudes sodium in exchange for external protons. The chain is Na(+)/H(+) antiporter NhaA from Erwinia tasmaniensis (strain DSM 17950 / CFBP 7177 / CIP 109463 / NCPPB 4357 / Et1/99).